Here is a 103-residue protein sequence, read N- to C-terminus: MARAANPAPRLLGAAMLLLLLVAAGRRAAGAPVVNELRCQCLQTVQGIHLKNMQSVKVTPPGPHCGQTEVIATLKTGQEVCLNPAAPMVKKIIDKMLNQASSN.

The first 30 residues, 1-30 (MARAANPAPRLLGAAMLLLLLVAAGRRAAG), serve as a signal peptide directing secretion. 2 disulfides stabilise this stretch: Cys39–Cys65 and Cys41–Cys81.

Belongs to the intercrine alpha (chemokine CxC) family.

It localises to the secreted. In terms of biological role, has chemotactic activity for neutrophils. This Ovis aries (Sheep) protein is Growth-regulated alpha protein (CXCL1).